We begin with the raw amino-acid sequence, 205 residues long: Arginine exporter protein ArgO (205 aa).

Helical transmembrane passes span 1–21, 42–62, 67–87, 111–131, 147–167, and 185–205; these read MLAV…PLGP, LCAL…SALL, LLLA…GWGA, ILVT…DTFV, WFAL…ALLA, and LFVG…GFGL.

This sequence belongs to the LysE/ArgO transporter (TC 2.A.75) family.

The protein localises to the cell inner membrane. It carries out the reaction L-arginine(in) = L-arginine(out). Its function is as follows. Involved in the export of arginine. Important to control the intracellular level of arginine and the correct balance between arginine and lysine. This is Arginine exporter protein ArgO from Yersinia pseudotuberculosis serotype IB (strain PB1/+).